The primary structure comprises 53 residues: Rubredoxin (53 aa).

A Rubredoxin-like domain is found at 1–53 (MQKFECTLCGYIYDPALVGPDTPDQDGAFEDVSENWVCPLCGAGKEDFEVYED). The Fe cation site is built by cysteine 6, cysteine 9, cysteine 38, and cysteine 41.

Belongs to the rubredoxin family. Requires Fe(3+) as cofactor.

In terms of biological role, rubredoxin is a small nonheme, iron protein lacking acid-labile sulfide. Its single Fe, chelated to 4 Cys, functions as an electron acceptor and may also stabilize the conformation of the molecule. In Peptoniphilus asaccharolyticus (Peptostreptococcus asaccharolyticus), this protein is Rubredoxin.